The following is a 109-amino-acid chain: UPF0154 protein UPA3_0273 (109 aa).

Residues 42–62 (VGLGIGIVLFLIAGLIIGYFI) form a helical membrane-spanning segment.

Belongs to the UPF0154 family.

The protein resides in the cell membrane. The chain is UPF0154 protein UPA3_0273 from Ureaplasma parvum serovar 3 (strain ATCC 27815 / 27 / NCTC 11736).